The primary structure comprises 370 residues: Cyanuric acid amidohydrolase (370 aa).

The interval 1 to 103 (MQAQVFRVPM…TIFTVQKTDN (103 aa)) is RU A. Substrate is bound by residues R51 and 82 to 83 (SG). Residues 113–250 (RLAVQQIFTR…NEIIVMGNSR (138 aa)) form an RU B region. K163 is an active-site residue. Substrate-binding positions include R195 and 233–234 (SA). The Nucleophile role is filled by S233. Positions 256 to 370 (LVIGHAEMKD…GPVAVIARTA (115 aa)) are RU C. E303 contributes to the Mg(2+) binding site. Substrate contacts are provided by residues R330 and 349 to 350 (SG). Positions 352, 355, 356, 357, and 360 each coordinate Mg(2+).

It belongs to the cyclic amide hydrolase (CyAH) family. Homotetramer.

It carries out the reaction cyanurate + H2O = 1-carboxybiuret + H(+). The protein operates within xenobiotic degradation; atrazine degradation; biuret from cyanurate: step 1/1. With respect to regulation, inhibited by barbituric acid. Functionally, responsible for the hydrolysis of cyanuric acid, an intermediate formed during catabolism of s-triazine based compounds in herbicides such as atrazine and polymers such as melamine. Catalyzes the hydrolytic opening of the s-triazine ring of cyanuric acid (2,4,6-trihydroxy-s-triazine) to yield carbon dioxide and carboxybiuret, which spontaneously decarboxylates to biuret. The protein is Cyanuric acid amidohydrolase (trzD) of Pseudomonas sp.